The sequence spans 373 residues: MGKPVDDLLNSLMNLLDSETPSGGGCHLCDGLLSRELGKMLRKALSELEGVELSSVKSGVSLPAILIEREDRIRANHNPPKMRSLKVTLTRLLDVAISSLTGLKVSQEPDAILIFDFERGDVKLELAPVFIFGRYRKLQRGISQSRRKCPECGGRGCEACGWKGKIPQGSVEGIVGEVMREFFSAEDYVLHGAGREDVDARMLGEGRPFVMELLSPKRRSADLREVESEINRRAAGLIEVKNLEFSRREKIRILKERSPNVKKLYRALVEVEGGVEEGELELLKGLEGAVIRQRTPKRVLWRRADITRLKRVYEVNFRRIDDKKFELFVLCDGGLYVKELISGDDGRTSPSVTEILGKKSFCSELDVLEVMVE.

Asp197 functions as the Nucleophile in the catalytic mechanism. 2 residues coordinate substrate: Tyr265 and Tyr336.

It belongs to the pseudouridine synthase Pus10 family.

It catalyses the reaction uridine(54) in tRNA = pseudouridine(54) in tRNA. The catalysed reaction is uridine(55) in tRNA = pseudouridine(55) in tRNA. Its function is as follows. Responsible for synthesis of pseudouridine from uracil-54 and uracil-55 in the psi GC loop of transfer RNAs. The polypeptide is tRNA pseudouridine synthase Pus10 (Korarchaeum cryptofilum (strain OPF8)).